The following is a 156-amino-acid chain: Small ribosomal subunit protein uS7 (156 aa).

This sequence belongs to the universal ribosomal protein uS7 family. As to quaternary structure, part of the 30S ribosomal subunit. Contacts proteins S9 and S11.

In terms of biological role, one of the primary rRNA binding proteins, it binds directly to 16S rRNA where it nucleates assembly of the head domain of the 30S subunit. Is located at the subunit interface close to the decoding center, probably blocks exit of the E-site tRNA. This is Small ribosomal subunit protein uS7 from Picosynechococcus sp. (strain ATCC 27264 / PCC 7002 / PR-6) (Agmenellum quadruplicatum).